A 238-amino-acid chain; its full sequence is Ribonuclease PH (238 aa).

Phosphate contacts are provided by residues arginine 86 and 124–126 (GTR).

It belongs to the RNase PH family. As to quaternary structure, homohexameric ring arranged as a trimer of dimers.

The catalysed reaction is tRNA(n+1) + phosphate = tRNA(n) + a ribonucleoside 5'-diphosphate. Its function is as follows. Phosphorolytic 3'-5' exoribonuclease that plays an important role in tRNA 3'-end maturation. Removes nucleotide residues following the 3'-CCA terminus of tRNAs; can also add nucleotides to the ends of RNA molecules by using nucleoside diphosphates as substrates, but this may not be physiologically important. Probably plays a role in initiation of 16S rRNA degradation (leading to ribosome degradation) during starvation. This Geobacter metallireducens (strain ATCC 53774 / DSM 7210 / GS-15) protein is Ribonuclease PH.